The following is a 339-amino-acid chain: N-acetyl-gamma-glutamyl-phosphate reductase (339 aa).

Cys144 is an active-site residue.

Belongs to the NAGSA dehydrogenase family. Type 1 subfamily.

The protein resides in the cytoplasm. It catalyses the reaction N-acetyl-L-glutamate 5-semialdehyde + phosphate + NADP(+) = N-acetyl-L-glutamyl 5-phosphate + NADPH + H(+). It participates in amino-acid biosynthesis; L-arginine biosynthesis; N(2)-acetyl-L-ornithine from L-glutamate: step 3/4. Functionally, catalyzes the NADPH-dependent reduction of N-acetyl-5-glutamyl phosphate to yield N-acetyl-L-glutamate 5-semialdehyde. In Methanobrevibacter smithii (strain ATCC 35061 / DSM 861 / OCM 144 / PS), this protein is N-acetyl-gamma-glutamyl-phosphate reductase.